Consider the following 516-residue polypeptide: Potassium voltage-gated channel subfamily A member 10 (516 aa).

A helical transmembrane segment spans residues 223-244 (VALVSVLVIVISIIIFCMETLP). A glycan (N-linked (GlcNAc...) asparagine) is linked at Asn261. Residues 276-296 (FFVIETACIIWFSFELFVRFI) form a helical membrane-spanning segment. The helical transmembrane segment at 308–328 (IMNIIDIVSIIPYFVTLTTEL) threads the bilayer. The N-linked (GlcNAc...) asparagine glycan is linked to Asn339. Residues 344–363 (ILRIIRLVRVFRIFKLSRHS) traverse the membrane as a helical; Voltage-sensor segment. Residues 380–400 (LGLLIFFLFIGVILFSSAVYF) traverse the membrane as a helical segment. Residues 426 to 431 (TVGYGD) carry the Selectivity filter motif. Residues 441–461 (IVGTLCAIAGVLTIALPVPVI) form a helical membrane-spanning segment. N-linked (GlcNAc...) asparagine glycosylation occurs at Asn503.

It belongs to the potassium channel family. A (Shaker) (TC 1.A.1.2) subfamily. Kv1.8/KCNA10 sub-subfamily. In terms of assembly, homotetramer. Detected in brain, cochlear sensory epithelium, cochlear ganglion, tegumentum vasculosum. Detected at low levels in cochlear lagena.

Its subcellular location is the membrane. It catalyses the reaction K(+)(in) = K(+)(out). Its activity is regulated as follows. The channel activity is up-regulated by cAMP. Voltage-gated potassium ion channel that mediates K(+) permeability of excitable membranes. When opened in response to the voltage difference across the membrane, KCNA10 channel selectively allows the flow of potassium ions across the membrane down their electrochemical gradient. The polypeptide is Potassium voltage-gated channel subfamily A member 10 (KCNA10) (Gallus gallus (Chicken)).